The primary structure comprises 1551 residues: Pentafunctional AROM polypeptide (1551 aa).

The 3-dehydroquinate synthase stretch occupies residues 1-379; sequence MSIEKVPILG…YQLKAHEVSK (379 aa). NAD(+) contacts are provided by residues 42–44, 80–83, 111–113, and aspartate 116; these read DTN, ENNK, and GGV. Arginine 127 is a 7-phospho-2-dehydro-3-deoxy-D-arabino-heptonate binding site. 136-137 lines the NAD(+) pocket; the sequence is TT. 7-phospho-2-dehydro-3-deoxy-D-arabino-heptonate contacts are provided by aspartate 143 and lysine 149. Lysine 158 contacts NAD(+). Asparagine 159 contributes to the 7-phospho-2-dehydro-3-deoxy-D-arabino-heptonate binding site. NAD(+)-binding positions include 176–179 and asparagine 187; that span reads YLES. Glutamate 191 lines the Zn(2+) pocket. 7-phospho-2-dehydro-3-deoxy-D-arabino-heptonate-binding positions include 191-194 and lysine 243; that span reads EVVK. The active-site Proton acceptor; for 3-dehydroquinate synthase activity is glutamate 253. 7-phospho-2-dehydro-3-deoxy-D-arabino-heptonate is bound by residues 257 to 261 and histidine 264; that span reads RNLLN. Zn(2+) is bound at residue histidine 264. Histidine 268 acts as the Proton acceptor; for 3-dehydroquinate synthase activity in catalysis. Positions 280 and 351 each coordinate 7-phospho-2-dehydro-3-deoxy-D-arabino-heptonate. Position 280 (histidine 280) interacts with Zn(2+). Positions 392 to 838 are EPSP synthase; that stretch reads VHPFKQPPQE…WDILHSKFNI (447 aa). A shikimate kinase region spans residues 858 to 1048; the sequence is DKSIIIIGMR…IPSGRSAALS (191 aa). Residue 865 to 872 coordinates ATP; the sequence is GMRGTGKS. The segment at 1049 to 1258 is 3-dehydroquinase; the sequence is LTVPDLNAIS…NEDGLLTIKE (210 aa). The active-site Schiff-base intermediate with substrate; for 3-dehydroquinate dehydratase activity is lysine 1194. Positions 1271–1551 are shikimate dehydrogenase; it reads AKKFWVIGSP…DVIHRAVVEE (281 aa).

The protein in the N-terminal section; belongs to the sugar phosphate cyclases superfamily. Dehydroquinate synthase family. This sequence in the 2nd section; belongs to the EPSP synthase family. It in the 3rd section; belongs to the shikimate kinase family. In the 4th section; belongs to the type-I 3-dehydroquinase family. The protein in the C-terminal section; belongs to the shikimate dehydrogenase family. Homodimer. Zn(2+) is required as a cofactor.

It localises to the cytoplasm. It catalyses the reaction 7-phospho-2-dehydro-3-deoxy-D-arabino-heptonate = 3-dehydroquinate + phosphate. The enzyme catalyses 3-dehydroquinate = 3-dehydroshikimate + H2O. It carries out the reaction shikimate + NADP(+) = 3-dehydroshikimate + NADPH + H(+). The catalysed reaction is shikimate + ATP = 3-phosphoshikimate + ADP + H(+). It catalyses the reaction 3-phosphoshikimate + phosphoenolpyruvate = 5-O-(1-carboxyvinyl)-3-phosphoshikimate + phosphate. Its pathway is metabolic intermediate biosynthesis; chorismate biosynthesis; chorismate from D-erythrose 4-phosphate and phosphoenolpyruvate: step 2/7. The protein operates within metabolic intermediate biosynthesis; chorismate biosynthesis; chorismate from D-erythrose 4-phosphate and phosphoenolpyruvate: step 3/7. It participates in metabolic intermediate biosynthesis; chorismate biosynthesis; chorismate from D-erythrose 4-phosphate and phosphoenolpyruvate: step 4/7. It functions in the pathway metabolic intermediate biosynthesis; chorismate biosynthesis; chorismate from D-erythrose 4-phosphate and phosphoenolpyruvate: step 5/7. Its pathway is metabolic intermediate biosynthesis; chorismate biosynthesis; chorismate from D-erythrose 4-phosphate and phosphoenolpyruvate: step 6/7. The AROM polypeptide catalyzes 5 consecutive enzymatic reactions in prechorismate polyaromatic amino acid biosynthesis. The sequence is that of Pentafunctional AROM polypeptide from Candida tropicalis (strain ATCC MYA-3404 / T1) (Yeast).